The sequence spans 345 residues: Phosphate acyltransferase (345 aa).

Belongs to the PlsX family. In terms of assembly, homodimer. Probably interacts with PlsY.

It is found in the cytoplasm. It carries out the reaction a fatty acyl-[ACP] + phosphate = an acyl phosphate + holo-[ACP]. Its pathway is lipid metabolism; phospholipid metabolism. Functionally, catalyzes the reversible formation of acyl-phosphate (acyl-PO(4)) from acyl-[acyl-carrier-protein] (acyl-ACP). This enzyme utilizes acyl-ACP as fatty acyl donor, but not acyl-CoA. The polypeptide is Phosphate acyltransferase (Dichelobacter nodosus (strain VCS1703A)).